Here is a 391-residue protein sequence, read N- to C-terminus: Formate-dependent phosphoribosylglycinamide formyltransferase (391 aa).

Residues 20–21 (EL) and Glu-80 each bind N(1)-(5-phospho-beta-D-ribosyl)glycinamide. Residues Arg-112, Lys-153, 158–163 (SSGKGQ), 193–196 (EGFV), and Glu-201 contribute to the ATP site. The 190-residue stretch at 117 to 306 (RLAAETLGLP…EFALHVRAIL (190 aa)) folds into the ATP-grasp domain. Positions 265 and 277 each coordinate Mg(2+). N(1)-(5-phospho-beta-D-ribosyl)glycinamide-binding positions include Asp-284, Lys-354, and 361-362 (RR).

This sequence belongs to the PurK/PurT family. In terms of assembly, homodimer.

It catalyses the reaction N(1)-(5-phospho-beta-D-ribosyl)glycinamide + formate + ATP = N(2)-formyl-N(1)-(5-phospho-beta-D-ribosyl)glycinamide + ADP + phosphate + H(+). The protein operates within purine metabolism; IMP biosynthesis via de novo pathway; N(2)-formyl-N(1)-(5-phospho-D-ribosyl)glycinamide from N(1)-(5-phospho-D-ribosyl)glycinamide (formate route): step 1/1. Its function is as follows. Involved in the de novo purine biosynthesis. Catalyzes the transfer of formate to 5-phospho-ribosyl-glycinamide (GAR), producing 5-phospho-ribosyl-N-formylglycinamide (FGAR). Formate is provided by PurU via hydrolysis of 10-formyl-tetrahydrofolate. This chain is Formate-dependent phosphoribosylglycinamide formyltransferase, found in Shewanella sp. (strain W3-18-1).